A 248-amino-acid chain; its full sequence is Ureidoacrylate amidohydrolase RutB (248 aa).

The Proton acceptor role is filled by Asp-41. Lys-150 is a catalytic residue. Residue Cys-183 is the Nucleophile of the active site.

Belongs to the isochorismatase family. RutB subfamily.

The catalysed reaction is (Z)-3-ureidoacrylate + H2O + H(+) = (Z)-3-aminoacrylate + NH4(+) + CO2. The enzyme catalyses (Z)-3-ureidoacrylate + H2O = (Z)-3-aminoacrylate + carbamate + H(+). It catalyses the reaction (Z)-2-methylureidoacrylate + H2O + H(+) = (Z)-2-methylaminoacrylate + NH4(+) + CO2. In terms of biological role, hydrolyzes ureidoacrylate to form aminoacrylate and carbamate. The carbamate hydrolyzes spontaneously, thereby releasing one of the nitrogen atoms of the pyrimidine ring as ammonia and one of its carbon atoms as CO2. This is Ureidoacrylate amidohydrolase RutB from Methylorubrum extorquens (strain DSM 6343 / CIP 106787 / DM4) (Methylobacterium extorquens).